Consider the following 193-residue polypeptide: Peptidyl-tRNA hydrolase (193 aa).

Tyr-17 contributes to the tRNA binding site. The active-site Proton acceptor is the His-22. TRNA-binding residues include Tyr-68, Asn-70, and Asn-116.

It belongs to the PTH family. As to quaternary structure, monomer.

Its subcellular location is the cytoplasm. The enzyme catalyses an N-acyl-L-alpha-aminoacyl-tRNA + H2O = an N-acyl-L-amino acid + a tRNA + H(+). Its function is as follows. Hydrolyzes ribosome-free peptidyl-tRNAs (with 1 or more amino acids incorporated), which drop off the ribosome during protein synthesis, or as a result of ribosome stalling. Catalyzes the release of premature peptidyl moieties from peptidyl-tRNA molecules trapped in stalled 50S ribosomal subunits, and thus maintains levels of free tRNAs and 50S ribosomes. This is Peptidyl-tRNA hydrolase from Acinetobacter baumannii (strain AB307-0294).